The following is a 143-amino-acid chain: Large ribosomal subunit protein uL15 (143 aa).

Residues 1 to 52 (MELNSIQPADGAKHYKRRVGRGIGSGLGKTSGRGHKGQKSRSGGFHKVGFEG) are disordered. Residues 21-31 (RGIGSGLGKTS) are compositionally biased toward gly residues.

Belongs to the universal ribosomal protein uL15 family. Part of the 50S ribosomal subunit.

Functionally, binds to the 23S rRNA. In Janthinobacterium sp. (strain Marseille) (Minibacterium massiliensis), this protein is Large ribosomal subunit protein uL15.